We begin with the raw amino-acid sequence, 236 residues long: MDHIHHLLSSHGFTRTRLAKSKPIVVHAIAGSGKSTVIRKILSDLPNARAYTLGKPDPYSLSNPTIKAFAQFKRGTLDILDEYGQLPFADLDSSFEFIFTDPYQAPTDNLFEPHYTLEITYRFGPNTCNLLNQAFQSNITSLVTQDNISFGSPYLVDPVGTILAFQPDTYLILCLHQAPFFKVSEVIGYQWPTVTLYLACKISEIPEEERHLLFIGLTRHTESLLILGPDAFDSSP.

Positions 1–117 constitute a (+)RNA virus helicase ATP-binding domain; that stretch reads MDHIHHLLSS…DNLFEPHYTL (117 aa). The 119-residue stretch at 118–236 folds into the (+)RNA virus helicase C-terminal domain; sequence EITYRFGPNT…LGPDAFDSSP (119 aa).

This sequence belongs to the Tymovirales TGBp1 protein family. As to quaternary structure, homodimer and homooligomer. Interacts with capsid protein. Interacts with host AGO1; this interaction targets the host protein for degradation, thereby suppressing the antiviral RNA silencing.

It is found in the host cytoplasm. Its function is as follows. Transports viral genome to neighboring plant cells directly through plasmosdesmata, without any budding. The movement protein allows efficient cell to cell propagation, by bypassing the host cell wall barrier. Increases plasmodesma size exclusion limit. Acts as a suppressor of RNA-mediated gene silencing, also known as post-transcriptional gene silencing (PTGS), a mechanism of plant viral defense that limits the accumulation of viral RNAs. The chain is Movement and silencing protein TGBp1 from White clover mosaic virus (strain O) (WCMV).